We begin with the raw amino-acid sequence, 284 residues long: Bifunctional protein FolD (284 aa).

NADP(+)-binding positions include 163–165 (GRS) and serine 188.

It belongs to the tetrahydrofolate dehydrogenase/cyclohydrolase family. In terms of assembly, homodimer.

The enzyme catalyses (6R)-5,10-methylene-5,6,7,8-tetrahydrofolate + NADP(+) = (6R)-5,10-methenyltetrahydrofolate + NADPH. The catalysed reaction is (6R)-5,10-methenyltetrahydrofolate + H2O = (6R)-10-formyltetrahydrofolate + H(+). It functions in the pathway one-carbon metabolism; tetrahydrofolate interconversion. Catalyzes the oxidation of 5,10-methylenetetrahydrofolate to 5,10-methenyltetrahydrofolate and then the hydrolysis of 5,10-methenyltetrahydrofolate to 10-formyltetrahydrofolate. The sequence is that of Bifunctional protein FolD from Lactococcus lactis subsp. lactis (strain IL1403) (Streptococcus lactis).